A 233-amino-acid polypeptide reads, in one-letter code: Large ribosomal subunit protein uL1 (233 aa).

Belongs to the universal ribosomal protein uL1 family. In terms of assembly, part of the 50S ribosomal subunit.

In terms of biological role, binds directly to 23S rRNA. The L1 stalk is quite mobile in the ribosome, and is involved in E site tRNA release. Its function is as follows. Protein L1 is also a translational repressor protein, it controls the translation of the L11 operon by binding to its mRNA. This is Large ribosomal subunit protein uL1 from Polynucleobacter necessarius subsp. necessarius (strain STIR1).